The primary structure comprises 267 residues: Tryptophan synthase alpha chain (267 aa).

Catalysis depends on proton acceptor residues Glu47 and Asp58.

It belongs to the TrpA family. As to quaternary structure, tetramer of two alpha and two beta chains.

It catalyses the reaction (1S,2R)-1-C-(indol-3-yl)glycerol 3-phosphate + L-serine = D-glyceraldehyde 3-phosphate + L-tryptophan + H2O. It participates in amino-acid biosynthesis; L-tryptophan biosynthesis; L-tryptophan from chorismate: step 5/5. In terms of biological role, the alpha subunit is responsible for the aldol cleavage of indoleglycerol phosphate to indole and glyceraldehyde 3-phosphate. The sequence is that of Tryptophan synthase alpha chain from Chlorobaculum parvum (strain DSM 263 / NCIMB 8327) (Chlorobium vibrioforme subsp. thiosulfatophilum).